Reading from the N-terminus, the 40-residue chain is Photosystem II reaction center protein J (40 aa).

Residues 8-28 (IPLWLIGTVTGILVIGLIGFF) traverse the membrane as a helical segment.

This sequence belongs to the PsbJ family. In terms of assembly, PSII is composed of 1 copy each of membrane proteins PsbA, PsbB, PsbC, PsbD, PsbE, PsbF, PsbH, PsbI, PsbJ, PsbK, PsbL, PsbM, PsbT, PsbX, PsbY, PsbZ, Psb30/Ycf12, at least 3 peripheral proteins of the oxygen-evolving complex and a large number of cofactors. It forms dimeric complexes.

It is found in the plastid. Its subcellular location is the chloroplast thylakoid membrane. Functionally, one of the components of the core complex of photosystem II (PSII). PSII is a light-driven water:plastoquinone oxidoreductase that uses light energy to abstract electrons from H(2)O, generating O(2) and a proton gradient subsequently used for ATP formation. It consists of a core antenna complex that captures photons, and an electron transfer chain that converts photonic excitation into a charge separation. This Zea mays (Maize) protein is Photosystem II reaction center protein J.